We begin with the raw amino-acid sequence, 285 residues long: Pantothenate synthetase (285 aa).

30-37 is an ATP binding site; it reads MGYLHEGH. The Proton donor role is filled by His-37. Gln-61 is a (R)-pantoate binding site. Gln-61 is a binding site for beta-alanine. 148–151 provides a ligand contact to ATP; sequence GKKD. Gln-154 contacts (R)-pantoate. Residues Val-177 and 185–188 contribute to the ATP site; that span reads LSSR.

This sequence belongs to the pantothenate synthetase family. As to quaternary structure, homodimer.

It is found in the cytoplasm. It carries out the reaction (R)-pantoate + beta-alanine + ATP = (R)-pantothenate + AMP + diphosphate + H(+). The protein operates within cofactor biosynthesis; (R)-pantothenate biosynthesis; (R)-pantothenate from (R)-pantoate and beta-alanine: step 1/1. Its function is as follows. Catalyzes the condensation of pantoate with beta-alanine in an ATP-dependent reaction via a pantoyl-adenylate intermediate. The chain is Pantothenate synthetase from Leptospira interrogans serogroup Icterohaemorrhagiae serovar Lai (strain 56601).